Here is a 230-residue protein sequence, read N- to C-terminus: 7-cyano-7-deazaguanine synthase (230 aa).

9-19 (ISGGLDSTTCL) serves as a coordination point for ATP. Zn(2+) is bound by residues cysteine 192, cysteine 202, cysteine 205, and cysteine 208.

It belongs to the QueC family. It depends on Zn(2+) as a cofactor.

It catalyses the reaction 7-carboxy-7-deazaguanine + NH4(+) + ATP = 7-cyano-7-deazaguanine + ADP + phosphate + H2O + H(+). The protein operates within purine metabolism; 7-cyano-7-deazaguanine biosynthesis. In terms of biological role, catalyzes the ATP-dependent conversion of 7-carboxy-7-deazaguanine (CDG) to 7-cyano-7-deazaguanine (preQ(0)). This Myxococcus xanthus (strain DK1622) protein is 7-cyano-7-deazaguanine synthase.